The sequence spans 79 residues: Small ribosomal subunit protein uS17 (79 aa).

Belongs to the universal ribosomal protein uS17 family. Part of the 30S ribosomal subunit.

One of the primary rRNA binding proteins, it binds specifically to the 5'-end of 16S ribosomal RNA. This is Small ribosomal subunit protein uS17 from Bartonella henselae (strain ATCC 49882 / DSM 28221 / CCUG 30454 / Houston 1) (Rochalimaea henselae).